Reading from the N-terminus, the 138-residue chain is 18 kDa antigen 2 (138 aa).

In terms of domain architecture, sHSP spans 21–131 (GTRRPAVMPM…KPRRIEINHN (111 aa)).

Belongs to the small heat shock protein (HSP20) family.

Not known. This protein is one of the major immune reactive proteins in mycobacteria. The protein is 18 kDa antigen 2 of Mycobacterium avium.